Here is a 430-residue protein sequence, read N- to C-terminus: Serine--tRNA ligase (430 aa).

237–239 (TAE) provides a ligand contact to L-serine. Residue 268–270 (RSE) participates in ATP binding. Residue E291 coordinates L-serine. ATP is bound at residue 355–358 (EISS). Residue S391 coordinates L-serine.

Belongs to the class-II aminoacyl-tRNA synthetase family. Type-1 seryl-tRNA synthetase subfamily. Homodimer. The tRNA molecule binds across the dimer.

Its subcellular location is the cytoplasm. It catalyses the reaction tRNA(Ser) + L-serine + ATP = L-seryl-tRNA(Ser) + AMP + diphosphate + H(+). The enzyme catalyses tRNA(Sec) + L-serine + ATP = L-seryl-tRNA(Sec) + AMP + diphosphate + H(+). It functions in the pathway aminoacyl-tRNA biosynthesis; selenocysteinyl-tRNA(Sec) biosynthesis; L-seryl-tRNA(Sec) from L-serine and tRNA(Sec): step 1/1. In terms of biological role, catalyzes the attachment of serine to tRNA(Ser). Is also able to aminoacylate tRNA(Sec) with serine, to form the misacylated tRNA L-seryl-tRNA(Sec), which will be further converted into selenocysteinyl-tRNA(Sec). This is Serine--tRNA ligase from Shigella boydii serotype 18 (strain CDC 3083-94 / BS512).